The primary structure comprises 456 residues: tRNA-2-methylthio-N(6)-dimethylallyladenosine synthase (456 aa).

The 118-residue stretch at 9–126 folds into the MTTase N-terminal domain; the sequence is KKLYIKTHGC…LPEMMETKKS (118 aa). 6 residues coordinate [4Fe-4S] cluster: cysteine 18, cysteine 55, cysteine 89, cysteine 163, cysteine 167, and cysteine 170. The Radical SAM core domain maps to 149 to 381; that stretch reads DADGVSAFVS…QDRITQQAMA (233 aa). Residues 384 to 448 form the TRAM domain; it reads RRMVGNTERI…PNSLRGSLIA (65 aa).

The protein belongs to the methylthiotransferase family. MiaB subfamily. As to quaternary structure, monomer. Requires [4Fe-4S] cluster as cofactor.

The protein resides in the cytoplasm. The catalysed reaction is N(6)-dimethylallyladenosine(37) in tRNA + (sulfur carrier)-SH + AH2 + 2 S-adenosyl-L-methionine = 2-methylsulfanyl-N(6)-dimethylallyladenosine(37) in tRNA + (sulfur carrier)-H + 5'-deoxyadenosine + L-methionine + A + S-adenosyl-L-homocysteine + 2 H(+). In terms of biological role, catalyzes the methylthiolation of N6-(dimethylallyl)adenosine (i(6)A), leading to the formation of 2-methylthio-N6-(dimethylallyl)adenosine (ms(2)i(6)A) at position 37 in tRNAs that read codons beginning with uridine. This Cellvibrio japonicus (strain Ueda107) (Pseudomonas fluorescens subsp. cellulosa) protein is tRNA-2-methylthio-N(6)-dimethylallyladenosine synthase.